The following is a 725-amino-acid chain: MSEDTVPEAASPPPSQGQHYFDRFSEDDPEYLRLRNRAADLRQDFNLMEQKKRVTMILQSPSFREELEGLIQEQMKKGNNSSNIWALRQIADFMASTSHAVFPASSMNFSMMTPINDLHTADSLNLAKGERLMRCKISSVYRLLDLYGWAQLSDTYVTLRVSKEQDHFLISPKGVSCSEVTASSLIKVNILGEVVEKGSSCFPVDTTGFSLHSAIYAARPDVRCAIHLHTPATAAVSAMKCGLLPVSHNALLVGDMAYYDFNGEMEQEADRINLQKCLGPTCKILVLRNHGMVALGDTVEEAFYKVFHLQAACEVQVSALSSAGGTENLILLEQEKHRPHEVGSVQWAGSTFGPMQKSRLGEHEFEALMRMLDNLGYRTGYTYRHPFVQEKTKHKSEVEIPATVTAFVFEEDGVPVPALRQHAQKQQKEKTRWLNTPNTYLRVNVADEVQRNMGSPRPKTTWMKADEVEKSSSGMPIRIENPNQFVPLYTDPQEVLDMRNKIREQNRQDIKSAGPQSQLLASVIAEKSRSPSTESQLMSKGDADTKDESEETVPNPFSQLTDQELEEYKKEVERKKLEQEQEGEKDIATEKPGSPVKSTPASPVQSPSKAGTKSPAVSPSKTSEDTKKTEVSEANTEPEPVKPEGLVVNGKEEEPSVEEALSKGLGQMTTNADTDGDSYKDKTESVTSGPLSPEGSPSKSPSKKKKKFRTPSFLKKSKKKEKVES.

Positions 1–22 are disordered; it reads MSEDTVPEAASPPPSQGQHYFD. S11 and S25 each carry phosphoserine. T55 is modified (phosphothreonine). Phosphoserine occurs at positions 60 and 344. An interaction with calmodulin region spans residues 425–444; that stretch reads KQQKEKTRWLNTPNTYLRVN. Positions 525–725 are disordered; it reads AEKSRSPSTE…KSKKKEKVES (201 aa). S530 and S532 each carry phosphoserine. Residue T533 is modified to Phosphothreonine. S535 carries the phosphoserine modification. T561 bears the Phosphothreonine mark. Residues 566–589 are compositionally biased toward basic and acidic residues; it reads EEYKKEVERKKLEQEQEGEKDIAT. 4 positions are modified to phosphoserine: S594, S598, S602, and S606. Over residues 596-621 the composition is skewed to polar residues; sequence VKSTPASPVQSPSKAGTKSPAVSPSK. The residue at position 612 (T612) is a Phosphothreonine. Residues S614, S618, and S620 each carry the phosphoserine modification. Over residues 622 to 631 the composition is skewed to basic and acidic residues; the sequence is TSEDTKKTEV. T674 is subject to Phosphothreonine. Phosphoserine occurs at positions 678, 685, 688, 692, 696, 698, 700, 702, and 712. Positions 687–700 are enriched in low complexity; it reads TSGPLSPEGSPSKS. Over residues 701 to 725 the composition is skewed to basic residues; sequence PSKKKKKFRTPSFLKKSKKKEKVES. The tract at residues 703-720 is interaction with calmodulin; that stretch reads KKKKKFRTPSFLKKSKKK.

The protein belongs to the aldolase class II family. Adducin subfamily. In terms of assembly, found in a complex with ADD2, DMTN and SLC2A1. Interacts with SLC2A1. Heterodimer of an alpha and a beta subunit.

The protein resides in the cytoplasm. It localises to the cytoskeleton. It is found in the cell membrane. Functionally, membrane-cytoskeleton-associated protein that promotes the assembly of the spectrin-actin network. Binds to the erythrocyte membrane receptor SLC2A1/GLUT1 and may therefore provide a link between the spectrin cytoskeleton to the plasma membrane. Binds to calmodulin. Calmodulin binds preferentially to the beta subunit. This chain is Beta-adducin (Add2), found in Mus musculus (Mouse).